Here is a 683-residue protein sequence, read N- to C-terminus: DNA ligase 2 (683 aa).

Residues 27-31 (DGEFD), 76-77 (SL), and glutamate 106 each bind NAD(+). The active-site N6-AMP-lysine intermediate is the lysine 108. NAD(+) is bound by residues arginine 129, glutamate 169, lysine 285, and lysine 309. The Zn(2+) site is built by cysteine 403, cysteine 406, cysteine 422, and cysteine 428. Positions 592–681 (SIERTLEGLS…PAAVAAEEPE (90 aa)) constitute a BRCT domain.

Belongs to the NAD-dependent DNA ligase family. LigA subfamily. Mg(2+) serves as cofactor. The cofactor is Mn(2+).

The enzyme catalyses NAD(+) + (deoxyribonucleotide)n-3'-hydroxyl + 5'-phospho-(deoxyribonucleotide)m = (deoxyribonucleotide)n+m + AMP + beta-nicotinamide D-nucleotide.. DNA ligase that catalyzes the formation of phosphodiester linkages between 5'-phosphoryl and 3'-hydroxyl groups in double-stranded DNA using NAD as a coenzyme and as the energy source for the reaction. It is essential for DNA replication and repair of damaged DNA. This Nocardia farcinica (strain IFM 10152) protein is DNA ligase 2.